A 120-amino-acid chain; its full sequence is Large ribosomal subunit protein uL18 (120 aa).

Belongs to the universal ribosomal protein uL18 family. As to quaternary structure, part of the 50S ribosomal subunit; part of the 5S rRNA/L5/L18/L25 subcomplex. Contacts the 5S and 23S rRNAs.

In terms of biological role, this is one of the proteins that bind and probably mediate the attachment of the 5S RNA into the large ribosomal subunit, where it forms part of the central protuberance. The protein is Large ribosomal subunit protein uL18 of Bradyrhizobium sp. (strain BTAi1 / ATCC BAA-1182).